A 93-amino-acid chain; its full sequence is Exodeoxyribonuclease 7 small subunit (93 aa).

The segment covering 1–17 (MAKSSASSLSSAKPVAA) has biased composition (low complexity). Positions 1–22 (MAKSSASSLSSAKPVAAGPDAS) are disordered.

Belongs to the XseB family. Heterooligomer composed of large and small subunits.

It is found in the cytoplasm. It catalyses the reaction Exonucleolytic cleavage in either 5'- to 3'- or 3'- to 5'-direction to yield nucleoside 5'-phosphates.. In terms of biological role, bidirectionally degrades single-stranded DNA into large acid-insoluble oligonucleotides, which are then degraded further into small acid-soluble oligonucleotides. The protein is Exodeoxyribonuclease 7 small subunit of Polaromonas naphthalenivorans (strain CJ2).